The sequence spans 204 residues: Intraflagellar transport protein 27 (204 aa).

Residues 23–30 (GEATVGKS), 75–79 (DTAGS), and 136–139 (NKTD) contribute to the GTP site.

This sequence belongs to the small GTPase superfamily. Rab family. In terms of assembly, component of the IFT complex B, the core composed of IFT25, IFT27, IFT46, IFT52, IFT74, IFT81 and IFT88 as well as associated subunits IFT20, IFT57, IFT80 and IFT172. Interacts with IFT25; the interaction is direct.

The protein resides in the cell projection. The protein localises to the cilium. It localises to the flagellum. Its subcellular location is the cytoplasm. It is found in the cytoskeleton. The protein resides in the flagellum basal body. In terms of biological role, small GTPase-like component of the intraflagellar transport (IFT) complex B. Forms a subcomplex within the IFT complex B with IFT25. Has very low GTPase activity either because it lacks the conserved catalytic Gln in position 79 or because it requires some GTPase-activating protein (GAP) for GTP turnover. The protein is Intraflagellar transport protein 27 (IFT27) of Chlamydomonas reinhardtii (Chlamydomonas smithii).